The following is a 231-amino-acid chain: S-norcoclaurine synthase 2 (231 aa).

A dopamine-binding site is contributed by 107–109 (YKE). The active-site Proton donor is the Lys121. Position 140 (Asp140) interacts with (4-hydroxyphenyl)acetaldehyde. The helical transmembrane segment at 210–230 (LLLCLIICLVIAGGMFVAGVP) threads the bilayer.

Belongs to the BetVI family. In terms of tissue distribution, expressed in roots, stems and leaves. Detected in flower buds and germinating seeds. Low expression in carpels. Restricted to sieve elements of the phloem adjacent or proximal to laticifers.

Its subcellular location is the endoplasmic reticulum membrane. It is found in the vacuole membrane. It catalyses the reaction (4-hydroxyphenyl)acetaldehyde + dopamine = (S)-norcoclaurine + H2O. It functions in the pathway alkaloid biosynthesis; (S)-reticuline biosynthesis. Its activity is regulated as follows. Activity doubles within 5 hours of elicitor treatment and continues to increase for at least 80 hours. In terms of biological role, involved in the biosynthesis of (S)-coclaurine, the common precursor of all benzylisoquinoline alkaloids such as morphine, sanguinarine, codeine or papaverine. Condenses dopamine and 4-hydroxyphenylacetaldehyde. This chain is S-norcoclaurine synthase 2, found in Papaver somniferum (Opium poppy).